The primary structure comprises 339 residues: DNA-directed RNA polymerase subunit alpha (339 aa).

The interval 1–233 is alpha N-terminal domain (alpha-NTD); the sequence is MVREEVAGST…DLFLPFLHAE (233 aa). The tract at residues 264 to 339 is alpha C-terminal domain (alpha-CTD); the sequence is KKGIPLNCIF…IDLLKNKLSF (76 aa).

This sequence belongs to the RNA polymerase alpha chain family. In plastids the minimal PEP RNA polymerase catalytic core is composed of four subunits: alpha, beta, beta', and beta''. When a (nuclear-encoded) sigma factor is associated with the core the holoenzyme is formed, which can initiate transcription.

The protein localises to the plastid. It is found in the chloroplast. It carries out the reaction RNA(n) + a ribonucleoside 5'-triphosphate = RNA(n+1) + diphosphate. Functionally, DNA-dependent RNA polymerase catalyzes the transcription of DNA into RNA using the four ribonucleoside triphosphates as substrates. The chain is DNA-directed RNA polymerase subunit alpha from Bromus inermis (Smooth brome grass).